Reading from the N-terminus, the 100-residue chain is Nucleoid-associated protein RoseRS_1534 (100 aa).

Belongs to the YbaB/EbfC family. As to quaternary structure, homodimer.

The protein localises to the cytoplasm. It localises to the nucleoid. In terms of biological role, binds to DNA and alters its conformation. May be involved in regulation of gene expression, nucleoid organization and DNA protection. This is Nucleoid-associated protein RoseRS_1534 from Roseiflexus sp. (strain RS-1).